The chain runs to 604 residues: Elongation factor 4 (604 aa).

In terms of domain architecture, tr-type G spans 9–191 (DAIRNFCIIA…AVISRVPAPA (183 aa)). GTP-binding positions include 21–26 (DHGKST) and 138–141 (NKID).

It belongs to the TRAFAC class translation factor GTPase superfamily. Classic translation factor GTPase family. LepA subfamily.

It localises to the cell inner membrane. It carries out the reaction GTP + H2O = GDP + phosphate + H(+). Functionally, required for accurate and efficient protein synthesis under certain stress conditions. May act as a fidelity factor of the translation reaction, by catalyzing a one-codon backward translocation of tRNAs on improperly translocated ribosomes. Back-translocation proceeds from a post-translocation (POST) complex to a pre-translocation (PRE) complex, thus giving elongation factor G a second chance to translocate the tRNAs correctly. Binds to ribosomes in a GTP-dependent manner. In Prosthecochloris aestuarii (strain DSM 271 / SK 413), this protein is Elongation factor 4.